The sequence spans 343 residues: Labda-7,13(16),14-triene synthase (343 aa).

Mg(2+)-binding residues include D114 and E119. Residues 114–119 (DDVHVE) carry the DDXXXE motif motif. R206 lines the substrate pocket. Positions 252, 256, and 260 each coordinate Mg(2+). The NXXXSXXXE motif motif lies at 252-260 (NDLYSFAYE).

It belongs to the terpene synthase family. It depends on Mg(2+) as a cofactor.

It catalyses the reaction (13E)-labda-7,13-dien-15-yl diphosphate = labda-7,13(16),14-triene + diphosphate. In terms of biological role, involved in the biosynthesis of the labdane-type bicyclic diterpene labda-7,13(16),14-triene. Catalyzes the conversion of labda-7,13(E)-dienyl diphosphate to yield labda-7,13(16),14-triene. This chain is Labda-7,13(16),14-triene synthase, found in Streptomyces clavuligerus.